A 260-amino-acid chain; its full sequence is Resolvase (260 aa).

Residues Glu-38 to Arg-241 form the Tyr recombinase domain. Active-site residues include Arg-73, Lys-105, His-193, Arg-196, and His-219. Tyr-228 acts as the O-(3'-phospho-DNA)-tyrosine intermediate in catalysis.

This sequence belongs to the 'phage' integrase family.

Its function is as follows. This resolvase acts at the RfsF equivalent resolution sequence of pColBM-CL139. This chain is Resolvase (resD), found in Escherichia coli.